A 655-amino-acid chain; its full sequence is uncharacterized protein (655 aa).

The region spanning 245 to 469 (PGVIAQALFT…NLKVIVNLGY (225 aa)) is the PE-PPE domain.

Belongs to the mycobacterial PPE family.

This is an uncharacterized protein from Mycobacterium tuberculosis (strain ATCC 25618 / H37Rv).